The following is an 809-amino-acid chain: Glycerol-3-phosphate acyltransferase (809 aa).

The HXXXXD motif signature appears at histidine 306–aspartate 311.

It belongs to the GPAT/DAPAT family.

It localises to the cell inner membrane. It catalyses the reaction sn-glycerol 3-phosphate + an acyl-CoA = a 1-acyl-sn-glycero-3-phosphate + CoA. Its pathway is phospholipid metabolism; CDP-diacylglycerol biosynthesis; CDP-diacylglycerol from sn-glycerol 3-phosphate: step 1/3. This chain is Glycerol-3-phosphate acyltransferase, found in Vibrio vulnificus (strain CMCP6).